A 428-amino-acid polypeptide reads, in one-letter code: Serine--tRNA ligase (428 aa).

Position 231-233 (231-233 (TAE)) interacts with L-serine. 262–264 (RSE) contacts ATP. Glu285 lines the L-serine pocket. 349-352 (EISS) is an ATP binding site. Ser385 provides a ligand contact to L-serine.

This sequence belongs to the class-II aminoacyl-tRNA synthetase family. Type-1 seryl-tRNA synthetase subfamily. As to quaternary structure, homodimer. The tRNA molecule binds across the dimer.

The protein localises to the cytoplasm. The catalysed reaction is tRNA(Ser) + L-serine + ATP = L-seryl-tRNA(Ser) + AMP + diphosphate + H(+). It catalyses the reaction tRNA(Sec) + L-serine + ATP = L-seryl-tRNA(Sec) + AMP + diphosphate + H(+). The protein operates within aminoacyl-tRNA biosynthesis; selenocysteinyl-tRNA(Sec) biosynthesis; L-seryl-tRNA(Sec) from L-serine and tRNA(Sec): step 1/1. Its function is as follows. Catalyzes the attachment of serine to tRNA(Ser). Is also able to aminoacylate tRNA(Sec) with serine, to form the misacylated tRNA L-seryl-tRNA(Sec), which will be further converted into selenocysteinyl-tRNA(Sec). The chain is Serine--tRNA ligase from Staphylococcus haemolyticus (strain JCSC1435).